A 363-amino-acid polypeptide reads, in one-letter code: Cyclin-D1-1 (363 aa).

The disordered stretch occupies residues 39 to 77 (ELEREGEPAQGSSPSSSLSCAAAAAAAADDDDEDEDEHG). Low complexity predominate over residues 50–65 (SSPSSSLSCAAAAAAA). Acidic residues predominate over residues 66 to 75 (ADDDDEDEDE).

It belongs to the cyclin family. Cyclin D subfamily.

The polypeptide is Cyclin-D1-1 (CYCD1-1) (Oryza sativa subsp. japonica (Rice)).